Here is a 505-residue protein sequence, read N- to C-terminus: Cytochrome P450 monooxygenase FGM1 (505 aa).

The signal sequence occupies residues 1–23; the sequence is MPLILSITSSGTVLVLLTLLSLA. 2 N-linked (GlcNAc...) asparagine glycosylation sites follow: Asn188 and Asn351. Residue Cys450 participates in heme binding.

The protein belongs to the cytochrome P450 family. Requires heme as cofactor.

It participates in secondary metabolite biosynthesis. Functionally, cytochrome P450 monooxygenase; part of the Fg3_54/C64 gene cluster that mediates the biosynthesis of the octapeptide fusaoctaxin A, a virulence factor that is required for cell-to-cell invasiveness of plant host. The 2 nonribosomal peptide synthetases NRPS9 and NRPS5 form an assembly line which likely utilizes GABA as a starter unit (loaded on the unique module M1 of NRPS9) and sequentially incorporates seven extender units composed of the residues L-Ala, L-allo-Ile, L-Ser, L-Val, L-Ser, L-Leu and L-Leu, respectively. During the process, each of the residues that are tethered on modules M3-M7 of NRPS5 containing an E domain can undergo an epimerization reaction to produce a D-configuration before the transpeptidation reaction occurs. The elongation of the peptidyl chain might be terminated by module M8-mediated L-Leu incorporation, followed by R domain-catalyzed 4 electron reduction to release the resulting octapeptide from the assembly line as an alcohol. Fusaoctaxin A is cleaved by the cluster specific ABC transporter FGM5 to the pentapeptide fusapentaxin A and the tripeptide fusatrixin A. The other enzymes from the cluster, FGM1, FGM2, FGM3 and FGM9 seem not to be involved in the biosynthesis of fusaoctaxin A and their functions have still to be determined. The sequence is that of Cytochrome P450 monooxygenase FGM1 from Gibberella zeae (strain ATCC MYA-4620 / CBS 123657 / FGSC 9075 / NRRL 31084 / PH-1) (Wheat head blight fungus).